A 169-amino-acid chain; its full sequence is Cell division inhibitor SulA (169 aa).

Positions 106 to 112 are ftsZ binding; the sequence is ALRTGNY. Residues 162-169 form a lon protease binding region; the sequence is KIHSNLYH.

The protein belongs to the SulA family. In terms of assembly, interacts with FtsZ. Is rapidly cleaved and degraded by the Lon protease once DNA damage is repaired.

Functionally, component of the SOS system and an inhibitor of cell division. Accumulation of SulA causes rapid cessation of cell division and the appearance of long, non-septate filaments. In the presence of GTP, binds a polymerization-competent form of FtsZ in a 1:1 ratio, thus inhibiting FtsZ polymerization and therefore preventing it from participating in the assembly of the Z ring. This mechanism prevents the premature segregation of damaged DNA to daughter cells during cell division. The protein is Cell division inhibitor SulA of Escherichia coli O81 (strain ED1a).